The following is a 347-amino-acid chain: MAVKVSIIGATGYTGAELVRILSRHPQAELVALTTQSYAGKKFWEVYPHLYGYNQLTCEEMNLPEIMESSDIVFVALPHGHAMPAAREAARRGRKLIDLGADFRLKDFRTYEQWYRVEHTARELLAGAVYGLPEVNRREIREAWLVANPGCYPTSAILALAPLLKNRLIDTSSIIIDSKSGVSGAGRGLALGSHFSEVNENFKAYNVAVHRHTPEIEQELGRIAGEDVAVTFTPHLLPVTRGILSTVYAKLAAPAGEEEIREVYLDYYRGEPFVRVLPAGMLPQIKWVAGTNHCDIGLTVDRRTGRVVVLSAIDNLVKGASGQAVQNMNIICGLPEDTGLAGPGLYP.

The active site involves Cys151.

This sequence belongs to the NAGSA dehydrogenase family. Type 1 subfamily.

The protein resides in the cytoplasm. The enzyme catalyses N-acetyl-L-glutamate 5-semialdehyde + phosphate + NADP(+) = N-acetyl-L-glutamyl 5-phosphate + NADPH + H(+). The protein operates within amino-acid biosynthesis; L-arginine biosynthesis; N(2)-acetyl-L-ornithine from L-glutamate: step 3/4. Catalyzes the NADPH-dependent reduction of N-acetyl-5-glutamyl phosphate to yield N-acetyl-L-glutamate 5-semialdehyde. The chain is N-acetyl-gamma-glutamyl-phosphate reductase from Pelotomaculum thermopropionicum (strain DSM 13744 / JCM 10971 / SI).